A 30-amino-acid chain; its full sequence is Urease subunit alpha (30 aa).

It belongs to the metallo-dependent hydrolases superfamily. Urease alpha subunit family. As to quaternary structure, heterotrimer of UreA (gamma), UreB (beta) and UreC (alpha) subunits. Three heterotrimers associate to form the active enzyme. Ni cation is required as a cofactor.

It is found in the cytoplasm. It carries out the reaction urea + 2 H2O + H(+) = hydrogencarbonate + 2 NH4(+). Its pathway is nitrogen metabolism; urea degradation; CO(2) and NH(3) from urea (urease route): step 1/1. This chain is Urease subunit alpha (ureC), found in Escherichia coli.